The primary structure comprises 125 residues: MARIAGIDLPREKRIVVGLTYIFGIGNSLSRVILKKAGIDESIRVKDLNESQEAAIRKALEESAKVEGDLRSEIQLNIKRLMDIGCYRGLRHRRGLPVNGQRTRTNARTRKGGKKTVANKKKVTK.

The tract at residues 95-125 is disordered; that stretch reads GLPVNGQRTRTNARTRKGGKKTVANKKKVTK. The span at 105–125 shows a compositional bias: basic residues; that stretch reads TNARTRKGGKKTVANKKKVTK.

It belongs to the universal ribosomal protein uS13 family. As to quaternary structure, part of the 30S ribosomal subunit. Forms a loose heterodimer with protein S19. Forms two bridges to the 50S subunit in the 70S ribosome.

Its function is as follows. Located at the top of the head of the 30S subunit, it contacts several helices of the 16S rRNA. In the 70S ribosome it contacts the 23S rRNA (bridge B1a) and protein L5 of the 50S subunit (bridge B1b), connecting the 2 subunits; these bridges are implicated in subunit movement. Contacts the tRNAs in the A and P-sites. The sequence is that of Small ribosomal subunit protein uS13 from Leptospira borgpetersenii serovar Hardjo-bovis (strain L550).